Reading from the N-terminus, the 482-residue chain is tRNA sulfurtransferase (482 aa).

The region spanning 61 to 165 is the THUMP domain; the sequence is QQVLEILTTT…DDKLNQILAH (105 aa). ATP-binding positions include 183–184, lysine 265, glycine 287, and glutamine 296; that span reads LI. Residues cysteine 344 and cysteine 456 are joined by a disulfide bond. The Rhodanese domain maps to 404–482; it reads IEEHAVVLDI…GFNNVKVYRP (79 aa). Catalysis depends on cysteine 456, which acts as the Cysteine persulfide intermediate.

This sequence belongs to the ThiI family.

Its subcellular location is the cytoplasm. It catalyses the reaction [ThiI sulfur-carrier protein]-S-sulfanyl-L-cysteine + a uridine in tRNA + 2 reduced [2Fe-2S]-[ferredoxin] + ATP + H(+) = [ThiI sulfur-carrier protein]-L-cysteine + a 4-thiouridine in tRNA + 2 oxidized [2Fe-2S]-[ferredoxin] + AMP + diphosphate. It carries out the reaction [ThiS sulfur-carrier protein]-C-terminal Gly-Gly-AMP + S-sulfanyl-L-cysteinyl-[cysteine desulfurase] + AH2 = [ThiS sulfur-carrier protein]-C-terminal-Gly-aminoethanethioate + L-cysteinyl-[cysteine desulfurase] + A + AMP + 2 H(+). Its pathway is cofactor biosynthesis; thiamine diphosphate biosynthesis. Its function is as follows. Catalyzes the ATP-dependent transfer of a sulfur to tRNA to produce 4-thiouridine in position 8 of tRNAs, which functions as a near-UV photosensor. Also catalyzes the transfer of sulfur to the sulfur carrier protein ThiS, forming ThiS-thiocarboxylate. This is a step in the synthesis of thiazole, in the thiamine biosynthesis pathway. The sulfur is donated as persulfide by IscS. The protein is tRNA sulfurtransferase of Vibrio vulnificus (strain CMCP6).